The chain runs to 407 residues: Argininosuccinate synthase (407 aa).

ATP contacts are provided by residues 11–19 (AYSGGLDTS) and A38. Positions 89 and 94 each coordinate L-citrulline. G119 serves as a coordination point for ATP. T121, N125, and D126 together coordinate L-aspartate. L-citrulline is bound at residue N125. Positions 129, 180, 189, 265, and 277 each coordinate L-citrulline.

It belongs to the argininosuccinate synthase family. Type 1 subfamily. Homotetramer.

It is found in the cytoplasm. The enzyme catalyses L-citrulline + L-aspartate + ATP = 2-(N(omega)-L-arginino)succinate + AMP + diphosphate + H(+). It participates in amino-acid biosynthesis; L-arginine biosynthesis; L-arginine from L-ornithine and carbamoyl phosphate: step 2/3. This chain is Argininosuccinate synthase, found in Magnetococcus marinus (strain ATCC BAA-1437 / JCM 17883 / MC-1).